A 335-amino-acid polypeptide reads, in one-letter code: Calcium/calmodulin-dependent protein kinase type I (335 aa).

Positions 31 to 291 (YRVGRVLGGG…AADALKHPFL (261 aa)) constitute a Protein kinase domain. 37–45 (LGGGTYATV) is an ATP binding site. Aspartate 154 functions as the Proton acceptor in the catalytic mechanism. Position 192 is a phosphothreonine; by autocatalysis (threonine 192). The tract at residues 310–334 (NARKTFRTAYNAVRAFNTWKKLENK) is calmodulin-binding.

Belongs to the protein kinase superfamily. CAMK Ser/Thr protein kinase family. CaMK subfamily.

It is found in the cytoplasm. The catalysed reaction is L-seryl-[protein] + ATP = O-phospho-L-seryl-[protein] + ADP + H(+). The enzyme catalyses L-threonyl-[protein] + ATP = O-phospho-L-threonyl-[protein] + ADP + H(+). In terms of biological role, important in cell cycle regulation. This Schizosaccharomyces pombe (strain 972 / ATCC 24843) (Fission yeast) protein is Calcium/calmodulin-dependent protein kinase type I (cmk1).